The primary structure comprises 301 residues: Protoheme IX farnesyltransferase 2 (301 aa).

9 helical membrane-spanning segments follow: residues 29 to 49, 51 to 71, 101 to 121, 123 to 143, 150 to 170, 177 to 197, 223 to 243, 244 to 264, and 281 to 301; these read VVAL…PTAV, VQPL…AAAL, ALIF…VLVN, LTAW…TAYL, NIVI…TAVT, ALLL…ALAI, CILL…LVGM, CGPM…YKAW, and FSIY…YLWS.

This sequence belongs to the UbiA prenyltransferase family. Protoheme IX farnesyltransferase subfamily.

The protein resides in the cell inner membrane. It carries out the reaction heme b + (2E,6E)-farnesyl diphosphate + H2O = Fe(II)-heme o + diphosphate. It participates in porphyrin-containing compound metabolism; heme O biosynthesis; heme O from protoheme: step 1/1. Converts heme B (protoheme IX) to heme O by substitution of the vinyl group on carbon 2 of heme B porphyrin ring with a hydroxyethyl farnesyl side group. In Shewanella sp. (strain W3-18-1), this protein is Protoheme IX farnesyltransferase 2.